Here is a 73-residue protein sequence, read N- to C-terminus: Neurogranin (73 aa).

In terms of domain architecture, IQ spans 26–55 (ANAAAAKIQASFRGHMTRKKIKGGEIDRKT). A Phosphoserine; by PKC modification is found at Ser-36. The segment covering 47–59 (KGGEIDRKTKDAE) has biased composition (basic and acidic residues). Positions 47 to 73 (KGGEIDRKTKDAECANSTRGGDLRNGD) are disordered.

This sequence belongs to the neurogranin family.

Its function is as follows. Acts as a 'third messenger' substrate of protein kinase C-mediated molecular cascades during synaptic development and remodeling. Binds to calmodulin in the absence of calcium. The chain is Neurogranin (NRGN) from Serinus canaria (Island canary).